We begin with the raw amino-acid sequence, 1163 residues long: Carbamoyl phosphate synthase large chain (1163 aa).

The segment at 1–456 (MPKRQDIKSI…SLQKALRGLE (456 aa)) is carboxyphosphate synthetic domain. R129 is an ATP binding site. Residues 148–170 (LANATDIKDHDRKSHEAERSALK) form a disordered region. The segment covering 153 to 170 (DIKDHDRKSHEAERSALK) has biased composition (basic and acidic residues). Positions 185–381 (LENQWNLGEG…IAKIAAKLAV (197 aa)) constitute an ATP-grasp 1 domain. Residues R222, G228, G229, E261, V263, E268, G294, V295, H296, Q338, and E352 each contribute to the ATP site. 3 residues coordinate Mg(2+): Q338, E352, and N354. 3 residues coordinate Mn(2+): Q338, E352, and N354. Residues 457-614 (TGLTGLDEIE…PFVGAARSEA (158 aa)) are oligomerization domain. A carbamoyl phosphate synthetic domain region spans residues 615–1026 (QVSDRKKVVI…AFAKSQLGAG (412 aa)). The ATP-grasp 2 domain occupies 743 to 955 (QKLLMKLDLN…IAKIAARVMA (213 aa)). Residues R779, S839, L841, E846, G871, I872, H873, S874, Q914, and E926 each contribute to the ATP site. Positions 914, 926, and 928 each coordinate Mg(2+). Q914, E926, and N928 together coordinate Mn(2+). The MGS-like domain maps to 1027–1163 (VDLPRDGTVF…VRPLQSYFET (137 aa)). The segment at 1027–1163 (VDLPRDGTVF…VRPLQSYFET (137 aa)) is allosteric domain.

The protein belongs to the CarB family. As to quaternary structure, composed of two chains; the small (or glutamine) chain promotes the hydrolysis of glutamine to ammonia, which is used by the large (or ammonia) chain to synthesize carbamoyl phosphate. Tetramer of heterodimers (alpha,beta)4. The cofactor is Mg(2+). Requires Mn(2+) as cofactor.

It catalyses the reaction hydrogencarbonate + L-glutamine + 2 ATP + H2O = carbamoyl phosphate + L-glutamate + 2 ADP + phosphate + 2 H(+). The enzyme catalyses hydrogencarbonate + NH4(+) + 2 ATP = carbamoyl phosphate + 2 ADP + phosphate + 2 H(+). It participates in amino-acid biosynthesis; L-arginine biosynthesis; carbamoyl phosphate from bicarbonate: step 1/1. The protein operates within pyrimidine metabolism; UMP biosynthesis via de novo pathway; (S)-dihydroorotate from bicarbonate: step 1/3. Its function is as follows. Large subunit of the glutamine-dependent carbamoyl phosphate synthetase (CPSase). CPSase catalyzes the formation of carbamoyl phosphate from the ammonia moiety of glutamine, carbonate, and phosphate donated by ATP, constituting the first step of 2 biosynthetic pathways, one leading to arginine and/or urea and the other to pyrimidine nucleotides. The large subunit (synthetase) binds the substrates ammonia (free or transferred from glutamine from the small subunit), hydrogencarbonate and ATP and carries out an ATP-coupled ligase reaction, activating hydrogencarbonate by forming carboxy phosphate which reacts with ammonia to form carbamoyl phosphate. This is Carbamoyl phosphate synthase large chain from Rhizobium meliloti (strain 1021) (Ensifer meliloti).